A 372-amino-acid polypeptide reads, in one-letter code: Aminomethyltransferase (372 aa).

It belongs to the GcvT family. As to quaternary structure, the glycine cleavage system is composed of four proteins: P, T, L and H.

The catalysed reaction is N(6)-[(R)-S(8)-aminomethyldihydrolipoyl]-L-lysyl-[protein] + (6S)-5,6,7,8-tetrahydrofolate = N(6)-[(R)-dihydrolipoyl]-L-lysyl-[protein] + (6R)-5,10-methylene-5,6,7,8-tetrahydrofolate + NH4(+). In terms of biological role, the glycine cleavage system catalyzes the degradation of glycine. The polypeptide is Aminomethyltransferase (Burkholderia ambifaria (strain MC40-6)).